We begin with the raw amino-acid sequence, 315 residues long: Gamma-hemolysin component C (315 aa).

The first 29 residues, 1 to 29, serve as a signal peptide directing secretion; sequence MLKNKILTTTLSVSLLAPLANPLLENAKA.

It belongs to the aerolysin family. As to quaternary structure, toxicity requires sequential binding and synergistic association of a class S and a class F component which form heterooligomeric complexes. HlgC (class S) associates with HlgB (class F) thus forming an CB toxin.

Toxin that seems to act by forming pores in the membrane of the cell. Has a hemolytic and a leucotoxic activity. The sequence is that of Gamma-hemolysin component C (hlgC) from Staphylococcus aureus (strain COL).